Here is a 524-residue protein sequence, read N- to C-terminus: Nucleoporin NUP56 (524 aa).

The disordered stretch occupies residues 1–219 (MADDPHNTST…SSMAKFASST (219 aa)). Composition is skewed to basic and acidic residues over residues 28–80 (VKED…EPEK), 114–168 (THDE…KEVE), and 179–199 (SAEK…KVDK). Residues 37-44 (ARRELKQT) carry the Nuclear localization signal motif. Positions 111 to 133 (KKRTHDELEQDGKEEEEKKEGEK) form a coiled coil. Over residues 200–219 (PQTSSSAFANSSMAKFASST) the composition is skewed to polar residues. FG repeat units lie at residues 223–224 (FG), 226–227 (FG), 237–238 (FG), 247–248 (FG), 266–267 (FG), 312–313 (FG), and 328–329 (FG). Disordered stretches follow at residues 247 to 284 (FGSK…QAGG) and 300 to 371 (GSSA…GEEK). Residues 248 to 277 (GSKSADASAAPAGPPKLSFGSASAASPFAS) are compositionally biased toward low complexity. Acidic residues-rich tracts occupy residues 332–345 (ESDE…EEGE) and 352–362 (GEGEEKEEEEK). Residues 345–376 (EENKSENGEGEEKEEEEKEEKASGEEKKKFKL) are a coiled coil. Residues 377 to 475 (QKVHIDDGEG…TPILPAMKFQ (99 aa)) form the RanBD1 domain. Residues 503 to 524 (SQANATQFSNMVEKIKEKLAAA) adopt a coiled-coil conformation.

The nuclear pore complex (NPC) constitutes the exclusive means of nucleocytoplasmic transport. NPCs allow the passive diffusion of ions and small molecules and the active, nuclear transport receptor-mediated bidirectional transport of macromolecules such as proteins, RNAs, ribonucleoparticles (RNPs), and ribosomal subunits across the nuclear envelope. The 55-60 MDa NPC is composed of at least 28 different subunits: AMO1, ELYS, GLE1, GLE2, MLP1, NDC1, NIC96, NSP1, NUP133, NUP145, NUP152, NUP159, NUP170, NUP188, NUP192, NUP37, NUP49, NUP53, NUP56, NUP57, NUP82, NUP84, NUP85, POM152, POM33, POM34, SEC13 and SEH1. Due to its 8-fold rotational symmetry, all subunits are present with 8 copies or multiples thereof.

It is found in the nucleus. It localises to the nuclear pore complex. The protein resides in the nucleus membrane. In terms of biological role, functions as a component of the nuclear pore complex (NPC). NPC components, collectively referred to as nucleoporins (NUPs), can play the role of both NPC structural components and of docking or interaction partners for transiently associated nuclear transport factors. Active directional transport is assured by both, a Phe-Gly (FG) repeat affinity gradient for these transport factors across the NPC and a transport cofactor concentration gradient across the nuclear envelope (GSP1 and GSP2 GTPases associated predominantly with GTP in the nucleus, with GDP in the cytoplasm). The polypeptide is Nucleoporin NUP56 (NUP56) (Chaetomium thermophilum (strain DSM 1495 / CBS 144.50 / IMI 039719) (Thermochaetoides thermophila)).